Reading from the N-terminus, the 606-residue chain is Prostaglandin G/H synthase 1 (606 aa).

The signal sequence occupies residues 1–30 (MSRSSPSLRLPVLLLLLLLLLLPPPPPVLP). Positions 38 to 76 (PVNPCCYFPCQHQGVCVRVALDRYQCDCTRTGYSGPNCT) constitute an EGF-like domain. 4 disulfide bridges follow: Cys42-Cys53, Cys43-Cys165, Cys47-Cys63, and Cys65-Cys75. N-linked (GlcNAc...) asparagine glycosylation is found at Asn74, Asn110, and Asn150. The active-site Proton acceptor is the His213. Catalysis depends on Tyr391, which acts as the For cyclooxygenase activity. His394 provides a ligand contact to heme b. Asn416 is a glycosylation site (N-linked (GlcNAc...) asparagine). Cys575 and Cys581 form a disulfide bridge.

This sequence belongs to the prostaglandin G/H synthase family. As to quaternary structure, homodimer. It depends on heme b as a cofactor.

The protein resides in the microsome membrane. It localises to the endoplasmic reticulum membrane. It catalyses the reaction (5Z,8Z,11Z,14Z)-eicosatetraenoate + AH2 + 2 O2 = prostaglandin H2 + A + H2O. The catalysed reaction is (5Z,8Z,11Z,14Z)-eicosatetraenoate + 2 O2 = prostaglandin G2. It carries out the reaction prostaglandin G2 + AH2 = prostaglandin H2 + A + H2O. The enzyme catalyses (9Z,12Z)-octadecadienoate + AH2 + O2 = (9R)-hydroxy-(10E,12Z)-octadecadienoate + A + H2O. It catalyses the reaction (9Z,12Z)-octadecadienoate + AH2 + O2 = (9S)-hydroxy-(10E,12Z)-octadecadienoate + A + H2O. The catalysed reaction is (9Z,12Z)-octadecadienoate + AH2 + O2 = (13S)-hydroxy-(9Z,11E)-octadecadienoate + A + H2O. It carries out the reaction (9Z,12Z)-octadecadienoate + AH2 + O2 = (13R)-hydroxy-(9Z,11E)-octadecadienoate + A + H2O. The protein operates within lipid metabolism; prostaglandin biosynthesis. The cyclooxygenase activity is inhibited by nonsteroidal anti-inflammatory drugs (NSAIDs) including ibuprofen, flurbiprofen, ketoprofen, naproxen, flurbiprofen, anirolac, fenclofenac and diclofenac. Dual cyclooxygenase and peroxidase that plays an important role in the biosynthesis pathway of prostanoids, a class of C20 oxylipins mainly derived from arachidonate ((5Z,8Z,11Z,14Z)-eicosatetraenoate, AA, C20:4(n-6)), with a particular role in the inflammatory response. The cyclooxygenase activity oxygenates AA to the hydroperoxy endoperoxide prostaglandin G2 (PGG2), and the peroxidase activity reduces PGG2 to the hydroxy endoperoxide prostaglandin H2 (PGH2), the precursor of all 2-series prostaglandins and thromboxanes. This complex transformation is initiated by abstraction of hydrogen at carbon 13 (with S-stereochemistry), followed by insertion of molecular O2 to form the endoperoxide bridge between carbon 9 and 11 that defines prostaglandins. The insertion of a second molecule of O2 (bis-oxygenase activity) yields a hydroperoxy group in PGG2 that is then reduced to PGH2 by two electrons. Involved in the constitutive production of prostanoids in particular in the stomach and platelets. In gastric epithelial cells, it is a key step in the generation of prostaglandins, such as prostaglandin E2 (PGE2), which plays an important role in cytoprotection. In platelets, it is involved in the generation of thromboxane A2 (TXA2), which promotes platelet activation and aggregation, vasoconstriction and proliferation of vascular smooth muscle cells. Can also use linoleate (LA, (9Z,12Z)-octadecadienoate, C18:2(n-6)) as substrate and produce hydroxyoctadecadienoates (HODEs) in a regio- and stereospecific manner, being (9R)-HODE ((9R)-hydroxy-(10E,12Z)-octadecadienoate) and (13S)-HODE ((13S)-hydroxy-(9Z,11E)-octadecadienoate) its major products. The polypeptide is Prostaglandin G/H synthase 1 (PTGS1) (Oryctolagus cuniculus (Rabbit)).